A 444-amino-acid chain; its full sequence is Bystin (444 aa).

2 disordered regions span residues 1 to 37 and 53 to 85; these read MAKK…HQKQ and ALAQ…TAGE. Positions 24-34 are enriched in basic residues; sequence SRKRSKVPKTH. Positions 73-84 are enriched in low complexity; it reads AAFAVAGAATAG.

Belongs to the bystin family. Component of the 40S pre-ribosome. In terms of tissue distribution, highly expressed in flowers and at lower levels in roots, hypocotyls, stems, leaves, siliques and seeds.

It localises to the nucleus. The protein resides in the nucleolus. It is found in the nucleoplasm. Functionally, essential protein required during embryogenesis and pollen development. Required for processing of 20S pre-rRNA precursor and biogenesis of 40S ribosomal subunits. This chain is Bystin, found in Arabidopsis thaliana (Mouse-ear cress).